We begin with the raw amino-acid sequence, 64 residues long: Large ribosomal subunit protein bL35 (64 aa).

This sequence belongs to the bacterial ribosomal protein bL35 family.

This is Large ribosomal subunit protein bL35 from Vibrio parahaemolyticus serotype O3:K6 (strain RIMD 2210633).